Reading from the N-terminus, the 291-residue chain is uncharacterized protein (291 aa).

The next 2 membrane-spanning stretches (helical) occupy residues 42-62 (IFFF…RALW) and 86-106 (TIFP…LALD).

The protein belongs to the cytochrome c oxidase subunit 2 family.

It localises to the mitochondrion membrane. This is an uncharacterized protein from Arabidopsis thaliana (Mouse-ear cress).